The following is a 153-amino-acid chain: Small heat shock protein ibp (153 aa).

The region spanning 35-153 (KIISDSVPPY…KIQKIQINVK (119 aa)) is the sHSP domain.

This sequence belongs to the small heat shock protein (HSP20) family.

The sequence is that of Small heat shock protein ibp (ibp) from Buchnera aphidicola subsp. Thelaxes suberi.